Here is a 409-residue protein sequence, read N- to C-terminus: Aspartic protease pepA (409 aa).

Positions 1 to 19 are cleaved as a signal peptide; the sequence is MPSIVSLTAALTFVGAVIA. Residues 20–65 constitute a propeptide, activation peptide; it reads SPVEKRSAFSVEQVPHTTYLKNGPAQKVKTLRKYGKPVPQSLLDAA. The 308-residue stretch at 97–404 folds into the Peptidase A1 domain; that stretch reads YLSPVTVGST…PDSPPRIGLA (308 aa). Catalysis depends on residues D113 and D293. An intrachain disulfide couples C329 to C364. N-linked (GlcNAc...) asparagine glycosylation is present at N335.

Belongs to the peptidase A1 family. Monomer.

It localises to the secreted. Functionally, secreted aspartic endopeptidase that allows assimilation of proteinaceous substrates. The scissile peptide bond is attacked by a nucleophilic water molecule activated by two aspartic residues in the active site. Shows a broad primary substrate specificity. Favors hydrophobic residues at the P1 and P1' positions. The protein is Aspartic protease pepA of Leptosphaeria maculans (strain JN3 / isolate v23.1.3 / race Av1-4-5-6-7-8) (Blackleg fungus).